The chain runs to 248 residues: MNIWIRGGTSDANNISKEIKRNFKDSFLILTTTTDFGGKIAENFADLVISEKMTYDNLKKTLLDKKIDVFIDATHPFATHASETGIKISKELNIPYIRYERPSEKFKNAFYVENYEEAAKLALKISKKNIFYMSGIKNLKNVSEIIPIEKLIVRILPTSVPEALKILPSKNIVAMQGVFSENLNKELIIDYNCDVIITKDSGKSGGLYEKVSGATLAGAKPIIIKRPEINYPLKFEKIVEIVNYLKNV.

The protein belongs to the precorrin-6x reductase family.

It carries out the reaction Co-precorrin-6B + NAD(+) = Co-precorrin-6A + NADH + H(+). The protein operates within cofactor biosynthesis; adenosylcobalamin biosynthesis; cob(II)yrinate a,c-diamide from sirohydrochlorin (anaerobic route): step 7/10. In terms of biological role, catalyzes the reduction of the macrocycle of cobalt-precorrin-6A to cobalt-precorrin-6B. This Methanococcus maripaludis (Methanococcus deltae) protein is Cobalt-precorrin-6A reductase (cbiJ).